Consider the following 325-residue polypeptide: Neisseria adhesin A (325 aa).

The signal sequence occupies residues 1–23 (MKHFQSKVLTAAILAALSGSAMA). The tract at residues 24–137 (DNPPPSTDEI…NTAAIGENKA (114 aa)) is head domain. Residues 86–135 (LKEVLAQHDQSLADLTGTVDENSEALVKTAEVVNDISADVKANTAAIGEN) are a coiled coil. Residues 139 to 231 (IAKKADQTAL…LASAEKSITE (93 aa)) form a coiled stalk domain region. The segment at 232–270 (HGTRLNGLDRTVSDLRKETRQGLAEQAALSGLFQPYNVG) is outer membrane translocation of the passenger domain. The next 4 membrane-spanning stretches (beta stranded) occupy residues 270–280 (GRFNVTAAVGG), 284–295 (ESAVAIGTGFRF), 302–308 (KAGVAVG), and 314–325 (SAAYHVGVNYEW). The translocator domain stretch occupies residues 271–325 (RFNVTAAVGGYKSESAVAIGTGFRFTENFAAKAGVAVGTSSGSSAAYHVGVNYEW).

The protein belongs to the autotransporter-2 (AT-2) (TC 1.B.40) family. As to quaternary structure, homotrimer.

It is found in the cell surface. Its subcellular location is the cell outer membrane. In terms of biological role, an antigenic bacterial cell surface protein that adheres to and induces bacterial uptake by human epithelial cells. The chain is Neisseria adhesin A from Neisseria meningitidis serogroup B.